Consider the following 67-residue polypeptide: Conotoxin TsMMSK-011 (67 aa).

The first 20 residues, 1–20 (MMSKLGVLLTICLLLFPLTA), serve as a signal peptide directing secretion. Positions 21–50 (VQLDGDQPADLPALRTQDISTDHSPWFDPV) are excised as a propeptide. 3 cysteine pairs are disulfide-bonded: Cys53–Cys65, Cys54–Cys61, and Cys58–Cys64. Pro63 bears the 4-hydroxyproline mark.

This sequence belongs to the conotoxin M superfamily. In terms of tissue distribution, expressed by the venom duct.

The protein localises to the secreted. This Conus tessulatus (Tessellate cone) protein is Conotoxin TsMMSK-011.